The following is a 545-amino-acid chain: Pentatricopeptide repeat-containing protein At4g18840 (545 aa).

11 PPR repeats span residues 104-138 (NGFT…PVFP), 139-173 (DKYS…GLVT), 174-204 (DVFV…MPVR), 205-239 (DAVS…NVES), 240-266 (WNFM…MPVR), 267-301 (DVVS…STEK), 303-337 (DGFT…GIEI), 338-368 (EGFL…TSKR), 369-403 (DVST…GFKP), 404-434 (NGIT…MSSV), and 440-474 (TIEH…EASI). The interval 475-545 (LLESLLGACK…ERVNRSLDVA (71 aa)) is type E motif.

This sequence belongs to the PPR family. PCMP-E subfamily.

This Arabidopsis thaliana (Mouse-ear cress) protein is Pentatricopeptide repeat-containing protein At4g18840 (PCMP-E101).